A 292-amino-acid chain; its full sequence is Phosphoribosylaminoimidazole-succinocarboxamide synthase (292 aa).

This sequence belongs to the SAICAR synthetase family.

It catalyses the reaction 5-amino-1-(5-phospho-D-ribosyl)imidazole-4-carboxylate + L-aspartate + ATP = (2S)-2-[5-amino-1-(5-phospho-beta-D-ribosyl)imidazole-4-carboxamido]succinate + ADP + phosphate + 2 H(+). The protein operates within purine metabolism; IMP biosynthesis via de novo pathway; 5-amino-1-(5-phospho-D-ribosyl)imidazole-4-carboxamide from 5-amino-1-(5-phospho-D-ribosyl)imidazole-4-carboxylate: step 1/2. This Thermodesulfovibrio yellowstonii (strain ATCC 51303 / DSM 11347 / YP87) protein is Phosphoribosylaminoimidazole-succinocarboxamide synthase.